We begin with the raw amino-acid sequence, 298 residues long: DDRGK domain-containing protein 1 (298 aa).

Topologically, residues 1–2 (ME) are lumenal. The chain crosses the membrane as a helical span at residues 3–23 (EIFALIVSMILIVAVIPLFFW). Topologically, residues 24–298 (KRRRDARSRE…ISGMEEISVS (275 aa)) are cytoplasmic. The disordered stretch occupies residues 31-155 (SREEVAEPPQ…EEEKARQAKE (125 aa)). Basic and acidic residues predominate over residues 101–155 (KRQEREAQRQAEEATRESRNTKQDWYAEMRRKKDEEREAEELKLEEEEKARQAKE).

This sequence belongs to the DDRGK1 family.

It is found in the endoplasmic reticulum membrane. Substrate adapter for ufmylation, the covalent attachment of the ubiquitin-like modifier UFM1 to substrate proteins. In Arabidopsis thaliana (Mouse-ear cress), this protein is DDRGK domain-containing protein 1.